We begin with the raw amino-acid sequence, 526 residues long: Peptide chain release factor 3 (526 aa).

Residues 8–277 (DKRRTFAIIS…GLTQWAPKPQ (270 aa)) enclose the tr-type G domain. GTP is bound by residues 17–24 (SHPDAGKT), 85–89 (DTPGH), and 139–142 (NKLD).

Belongs to the TRAFAC class translation factor GTPase superfamily. Classic translation factor GTPase family. PrfC subfamily.

Its subcellular location is the cytoplasm. In terms of biological role, increases the formation of ribosomal termination complexes and stimulates activities of RF-1 and RF-2. It binds guanine nucleotides and has strong preference for UGA stop codons. It may interact directly with the ribosome. The stimulation of RF-1 and RF-2 is significantly reduced by GTP and GDP, but not by GMP. This chain is Peptide chain release factor 3, found in Actinobacillus succinogenes (strain ATCC 55618 / DSM 22257 / CCUG 43843 / 130Z).